The chain runs to 376 residues: DNA replication and repair protein RecF (376 aa).

30–37 lines the ATP pocket; it reads GHNGVGKT.

It belongs to the RecF family.

The protein resides in the cytoplasm. In terms of biological role, the RecF protein is involved in DNA metabolism; it is required for DNA replication and normal SOS inducibility. RecF binds preferentially to single-stranded, linear DNA. It also seems to bind ATP. This is DNA replication and repair protein RecF from Salinispora arenicola (strain CNS-205).